A 454-amino-acid polypeptide reads, in one-letter code: Bifunctional protein GlmU (454 aa).

Positions methionine 1 to arginine 232 are pyrophosphorylase. UDP-N-acetyl-alpha-D-glucosamine-binding positions include leucine 11–glycine 14, lysine 25, glutamine 78, and glycine 83–threonine 84. Aspartate 108 provides a ligand contact to Mg(2+). Residues glycine 144, glutamate 158, asparagine 173, and asparagine 230 each coordinate UDP-N-acetyl-alpha-D-glucosamine. Asparagine 230 lines the Mg(2+) pocket. The tract at residues alanine 233–serine 253 is linker. Positions glycine 254–lysine 454 are N-acetyltransferase. 2 residues coordinate UDP-N-acetyl-alpha-D-glucosamine: arginine 319 and lysine 337. Histidine 349 functions as the Proton acceptor in the catalytic mechanism. UDP-N-acetyl-alpha-D-glucosamine is bound by residues tyrosine 352 and asparagine 363. Acetyl-CoA contacts are provided by residues alanine 366, asparagine 372–tyrosine 373, serine 391, serine 409, and arginine 426.

This sequence in the N-terminal section; belongs to the N-acetylglucosamine-1-phosphate uridyltransferase family. In the C-terminal section; belongs to the transferase hexapeptide repeat family. In terms of assembly, homotrimer. It depends on Mg(2+) as a cofactor.

Its subcellular location is the cytoplasm. It carries out the reaction alpha-D-glucosamine 1-phosphate + acetyl-CoA = N-acetyl-alpha-D-glucosamine 1-phosphate + CoA + H(+). The enzyme catalyses N-acetyl-alpha-D-glucosamine 1-phosphate + UTP + H(+) = UDP-N-acetyl-alpha-D-glucosamine + diphosphate. It participates in nucleotide-sugar biosynthesis; UDP-N-acetyl-alpha-D-glucosamine biosynthesis; N-acetyl-alpha-D-glucosamine 1-phosphate from alpha-D-glucosamine 6-phosphate (route II): step 2/2. It functions in the pathway nucleotide-sugar biosynthesis; UDP-N-acetyl-alpha-D-glucosamine biosynthesis; UDP-N-acetyl-alpha-D-glucosamine from N-acetyl-alpha-D-glucosamine 1-phosphate: step 1/1. Its pathway is bacterial outer membrane biogenesis; LPS lipid A biosynthesis. Its function is as follows. Catalyzes the last two sequential reactions in the de novo biosynthetic pathway for UDP-N-acetylglucosamine (UDP-GlcNAc). The C-terminal domain catalyzes the transfer of acetyl group from acetyl coenzyme A to glucosamine-1-phosphate (GlcN-1-P) to produce N-acetylglucosamine-1-phosphate (GlcNAc-1-P), which is converted into UDP-GlcNAc by the transfer of uridine 5-monophosphate (from uridine 5-triphosphate), a reaction catalyzed by the N-terminal domain. In Brucella abortus (strain S19), this protein is Bifunctional protein GlmU.